The following is a 352-amino-acid chain: Molybdenum import ATP-binding protein ModC (352 aa).

Residues 2 to 230 (MLEINVKKRL…PLFEPWQEQG (229 aa)) enclose the ABC transporter domain. 32–39 (GISGSGKS) provides a ligand contact to ATP. The region spanning 290 to 352 (KTSIRNILSG…YAQIKAVSVM (63 aa)) is the Mop domain.

This sequence belongs to the ABC transporter superfamily. Molybdate importer (TC 3.A.1.8) family. In terms of assembly, the complex is composed of two ATP-binding proteins (ModC), two transmembrane proteins (ModB) and a solute-binding protein (ModA).

The protein localises to the cell inner membrane. The catalysed reaction is molybdate(out) + ATP + H2O = molybdate(in) + ADP + phosphate + H(+). Its function is as follows. Part of the ABC transporter complex ModABC involved in molybdenum import. Responsible for energy coupling to the transport system. The chain is Molybdenum import ATP-binding protein ModC from Mannheimia succiniciproducens (strain KCTC 0769BP / MBEL55E).